Consider the following 411-residue polypeptide: Heterogeneous nuclear ribonucleoprotein 1 (411 aa).

An RRM 1 domain is found at 6–82 (GKLFVGGISW…REVDVKRAMS (77 aa)). 3 disordered regions span residues 81–103 (MSREEQQVSGRTGNLNTSRSSGG), 183–221 (KRALPKDANPGGGGRSMGGGGSGGYQGYGGNESSYDGRM), and 358–411 (AAYG…RQGQ). The segment covering 87–101 (QVSGRTGNLNTSRSS) has biased composition (polar residues). Residues 110 to 187 (KKIFVGGLPP…KQVEVKRALP (78 aa)) form the RRM 2 domain. 3 stretches are compositionally biased toward gly residues: residues 192–212 (PGGGGRSMGGGGSGGYQGYGG), 362–387 (VVGGRPSGGGSNNPGSGGYMGGGYGD), and 397–411 (GYGGGYNDGQGRQGQ). The tract at residues 341-390 (GYGYGGYSGSDSGYGNQAAYGVVGGRPSGGGSNNPGSGGYMGGGYGDGSW) is nuclear targeting sequence (M9).

Component of the spliceosome. Interacts with TRN1.

Its subcellular location is the nucleus. It is found in the cytoplasm. Functionally, involved with pre-mRNA processing. Forms complexes (ribonucleosomes) with at least 20 other different hnRNP and heterogeneous nuclear RNA in the nucleus. Involved in the packaging of pre-mRNA into hnRNP particles, transport of poly(A) mRNA from the nucleus to the cytoplasm and may modulate splice site selection. This chain is Heterogeneous nuclear ribonucleoprotein 1 (RNP1), found in Arabidopsis thaliana (Mouse-ear cress).